Consider the following 386-residue polypeptide: Succinate--CoA ligase [ADP-forming] subunit beta (386 aa).

The ATP-grasp domain maps to 9–244 (KELLRDYGVP…LNEEDEKEIE (236 aa)). Residues K46, 53–55 (GRG), E99, C102, and E107 each bind ATP. The Mg(2+) site is built by N199 and D213. Substrate-binding positions include N264 and 321–323 (GIM).

The protein belongs to the succinate/malate CoA ligase beta subunit family. In terms of assembly, heterotetramer of two alpha and two beta subunits. Requires Mg(2+) as cofactor.

The catalysed reaction is succinate + ATP + CoA = succinyl-CoA + ADP + phosphate. It catalyses the reaction GTP + succinate + CoA = succinyl-CoA + GDP + phosphate. The protein operates within carbohydrate metabolism; tricarboxylic acid cycle; succinate from succinyl-CoA (ligase route): step 1/1. Functionally, succinyl-CoA synthetase functions in the citric acid cycle (TCA), coupling the hydrolysis of succinyl-CoA to the synthesis of either ATP or GTP and thus represents the only step of substrate-level phosphorylation in the TCA. The beta subunit provides nucleotide specificity of the enzyme and binds the substrate succinate, while the binding sites for coenzyme A and phosphate are found in the alpha subunit. This is Succinate--CoA ligase [ADP-forming] subunit beta from Alkaliphilus oremlandii (strain OhILAs) (Clostridium oremlandii (strain OhILAs)).